The sequence spans 199 residues: Pyrrolidone-carboxylate peptidase (199 aa).

Catalysis depends on residues Glu80, Cys142, and His166.

Belongs to the peptidase C15 family. In terms of assembly, homotetramer.

It localises to the cytoplasm. It catalyses the reaction Release of an N-terminal pyroglutamyl group from a polypeptide, the second amino acid generally not being Pro.. Removes 5-oxoproline from various penultimate amino acid residues except L-proline. In Oceanobacillus iheyensis (strain DSM 14371 / CIP 107618 / JCM 11309 / KCTC 3954 / HTE831), this protein is Pyrrolidone-carboxylate peptidase.